The chain runs to 525 residues: Sensory neuron membrane protein 1 (525 aa).

Topologically, residues 1–11 (MLLPKELKYAA) are cytoplasmic. A helical membrane pass occupies residues 12–32 (IAGGVAVFGLIFGWVLFPVIL). The Extracellular segment spans residues 33-456 (KGQLKKEMAL…LKHQLFIPKR (424 aa)). 3 N-linked (GlcNAc...) asparagine glycosylation sites follow: N67, N229, and N324. 3 disulfides stabilise this stretch: C268/C333, C297/C352, and C335/C341. N440 is a glycosylation site (N-linked (GlcNAc...) asparagine). Residues 457-477 (VVGVLRWWMVSFGSLGADIGI) form a helical membrane-spanning segment. The Cytoplasmic portion of the chain corresponds to 478–525 (VYHFRDHIMRLAVSGDTKVSKVTPEEDPEQKDISVIGPPAQEPAKINI). The tract at residues 497-525 (SKVTPEEDPEQKDISVIGPPAQEPAKINI) is disordered.

The protein belongs to the CD36 family.

It is found in the cell membrane. Plays an olfactory role that is not restricted to pheromone sensitivity. In Mamestra brassicae (Cabbage moth), this protein is Sensory neuron membrane protein 1.